Here is a 368-residue protein sequence, read N- to C-terminus: Peptide chain release factor 2 (368 aa).

Glutamine 250 is subject to N5-methylglutamine.

The protein belongs to the prokaryotic/mitochondrial release factor family. Methylated by PrmC. Methylation increases the termination efficiency of RF2.

Its subcellular location is the cytoplasm. In terms of biological role, peptide chain release factor 2 directs the termination of translation in response to the peptide chain termination codons UGA and UAA. In Chlamydia trachomatis serovar L2 (strain ATCC VR-902B / DSM 19102 / 434/Bu), this protein is Peptide chain release factor 2.